The following is a 202-amino-acid chain: GTP cyclohydrolase 1 (202 aa).

Residues cysteine 90, histidine 93, and cysteine 163 each coordinate Zn(2+).

The protein belongs to the GTP cyclohydrolase I family. Toroid-shaped homodecamer, composed of two pentamers of five dimers.

It carries out the reaction GTP + H2O = 7,8-dihydroneopterin 3'-triphosphate + formate + H(+). It functions in the pathway cofactor biosynthesis; 7,8-dihydroneopterin triphosphate biosynthesis; 7,8-dihydroneopterin triphosphate from GTP: step 1/1. The sequence is that of GTP cyclohydrolase 1 (folE) from Mycobacterium bovis (strain ATCC BAA-935 / AF2122/97).